Reading from the N-terminus, the 102-residue chain is Small ribosomal subunit protein eS24 (102 aa).

It belongs to the eukaryotic ribosomal protein eS24 family.

This Methanococcus maripaludis (strain C7 / ATCC BAA-1331) protein is Small ribosomal subunit protein eS24.